The primary structure comprises 538 residues: Serine/threonine-protein phosphatase 5 (538 aa).

TPR repeat units follow at residues 13–46, 48–80, and 81–114; these read AEEF…NSNN, VYWA…DSRY, and SKGY…SPND. Transmembrane regions (helical) follow at residues 163–183 and 185–205; these read SSMP…VVAV and GFAT…TFWW. Residues aspartate 282, histidine 284, aspartate 311, and asparagine 343 each contribute to the Mn(2+) site. The Proton donor role is filled by histidine 344. Residues histidine 392 and histidine 467 each coordinate Mn(2+).

Belongs to the PPP phosphatase family. PP-5 (PP-T) subfamily. In terms of assembly, interacts with PHYA and PHYB, mostly when they are phosphorylated and in Pfr forms. It depends on Mn(2+) as a cofactor.

It is found in the endoplasmic reticulum membrane. It localises to the nucleus membrane. The protein resides in the cytoplasm. The protein localises to the nucleus. Its subcellular location is the nucleoplasm. It is found in the nucleus speckle. It catalyses the reaction O-phospho-L-seryl-[protein] + H2O = L-seryl-[protein] + phosphate. The catalysed reaction is O-phospho-L-threonyl-[protein] + H2O = L-threonyl-[protein] + phosphate. Activated by arachidonic acid (AA). Isoform 2 dephosphorylates phosphorylated phytochromes, with a preference toward Pfr forms, and enhances phytochrome-mediated photoresponses, probably by enhancing their stability and their binding affinity for light signal transducers such as NDPK2. Can use para-nitrophenylphosphate (pNPP) as substrate. The sequence is that of Serine/threonine-protein phosphatase 5 (PAPP5) from Arabidopsis thaliana (Mouse-ear cress).